We begin with the raw amino-acid sequence, 198 residues long: Holliday junction resolvase RecU (198 aa).

A disordered region spans residues 1 to 22; the sequence is MVNYPHKLSSQKRQTSLSQPKN. Polar residues predominate over residues 11–22; the sequence is QKRQTSLSQPKN. 4 residues coordinate Mg(2+): Thr81, Asp83, Glu96, and Gln115.

This sequence belongs to the RecU family. It depends on Mg(2+) as a cofactor.

It is found in the cytoplasm. It catalyses the reaction Endonucleolytic cleavage at a junction such as a reciprocal single-stranded crossover between two homologous DNA duplexes (Holliday junction).. Endonuclease that resolves Holliday junction intermediates in genetic recombination. Cleaves mobile four-strand junctions by introducing symmetrical nicks in paired strands. Promotes annealing of linear ssDNA with homologous dsDNA. Required for DNA repair, homologous recombination and chromosome segregation. This chain is Holliday junction resolvase RecU, found in Streptococcus pneumoniae (strain Hungary19A-6).